The primary structure comprises 151 residues: Thymosin beta (151 aa).

Repeat copies occupy residues 24-29, 62-67, 100-105, and 134-139. The segment at 24-139 is 4 X 6 AA repeat of L-[KH]-[KSH]-[VT]-[EP]-[TV]; sequence LKKVETTEKN…DKSALHHVET (116 aa).

It belongs to the thymosin beta family. As to quaternary structure, interacts (via repeats 1, 2 and 4) with G-actin in a 1:3 ratio. Interacts (via repeats 2 and 3) with F-actin. As to expression, at the comma stage, enriched in the developing nerve ring (at protein level). Ubiquitously expressed in larvae and adults with enrichment in the spermatheca, the intestinal tract and the posterior bulb of the pharynx (at protein level). Expressed in oocytes and in the gonad (at protein level).

The protein resides in the cytoplasm. It is found in the cell cortex. Its subcellular location is the cell junction. It localises to the cytoskeleton. Its function is as follows. Plays an important role in the organization of the cytoskeleton by regulating actin polymerization in two ways. Firstly, by binding to and sequestering actin monomers (G actin) inhibits actin polymerization. Secondly, by binding directly filamentous actin (F actin) promotes actin polymerization. Regulates the formation of cortical actin in oocytes conferring them enough rigidity to sustain the contractions during ovulation. In Caenorhabditis elegans, this protein is Thymosin beta.